The chain runs to 363 residues: Peptide chain release factor 2 (363 aa).

Residue Gln251 is modified to N5-methylglutamine.

The protein belongs to the prokaryotic/mitochondrial release factor family. Methylated by PrmC. Methylation increases the termination efficiency of RF2.

It localises to the cytoplasm. Its function is as follows. Peptide chain release factor 2 directs the termination of translation in response to the peptide chain termination codons UGA and UAA. The polypeptide is Peptide chain release factor 2 (Helicobacter acinonychis (strain Sheeba)).